A 623-amino-acid chain; its full sequence is Xaa-Pro aminopeptidase 1 (623 aa).

Arginine 77 contacts a peptide. At lysine 304 the chain carries N6-acetyllysine. Histidine 395 provides a ligand contact to a peptide. Residues aspartate 415, aspartate 426, and histidine 489 each contribute to the Mn(2+) site. A peptide-binding residues include histidine 489, histidine 498, and glutamate 523. Positions 523 and 537 each coordinate Mn(2+).

This sequence belongs to the peptidase M24B family. In terms of assembly, homodimer. Requires Mn(2+) as cofactor. As to expression, expressed in all tissues tested, including liver, adrenal decapsular tissue, adrenal capsular tissue, corpus luteum, testis, submandibular gland, thymus, brain, cerebellum and heart. Highest levels in testis.

The protein resides in the cytoplasm. It carries out the reaction Release of any N-terminal amino acid, including proline, that is linked to proline, even from a dipeptide or tripeptide.. With respect to regulation, inhibited by inositol hexakisphosphate. Metalloaminopeptidase that catalyzes the removal of a penultimate prolyl residue from the N-termini of peptides, such as Arg-Pro-Pro. Contributes to the degradation of bradykinin. The sequence is that of Xaa-Pro aminopeptidase 1 from Rattus norvegicus (Rat).